We begin with the raw amino-acid sequence, 213 residues long: Ras-related protein RabK1 (213 aa).

14–21 provides a ligand contact to GTP; that stretch reads GDRMVGKL. An Effector region motif is present at residues 36-43; it reads GNSIPFDF. GTP contacts are provided by residues 61-65 and 119-122; these read NTHGS and TKSD.

It belongs to the small GTPase superfamily. Rab family.

This Dictyostelium discoideum (Social amoeba) protein is Ras-related protein RabK1 (rabK1).